A 299-amino-acid chain; its full sequence is Phosphoribosylaminoimidazole-succinocarboxamide synthase (299 aa).

The protein belongs to the SAICAR synthetase family.

The catalysed reaction is 5-amino-1-(5-phospho-D-ribosyl)imidazole-4-carboxylate + L-aspartate + ATP = (2S)-2-[5-amino-1-(5-phospho-beta-D-ribosyl)imidazole-4-carboxamido]succinate + ADP + phosphate + 2 H(+). It participates in purine metabolism; IMP biosynthesis via de novo pathway; 5-amino-1-(5-phospho-D-ribosyl)imidazole-4-carboxamide from 5-amino-1-(5-phospho-D-ribosyl)imidazole-4-carboxylate: step 1/2. The chain is Phosphoribosylaminoimidazole-succinocarboxamide synthase from Streptomyces coelicolor (strain ATCC BAA-471 / A3(2) / M145).